Here is a 393-residue protein sequence, read N- to C-terminus: Metal tolerance protein A2 (393 aa).

Topologically, residues 1–72 (MVTPKLHLDL…EAQERAASMR (72 aa)) are cytoplasmic. The chain crosses the membrane as a helical span at residues 73 to 93 (KLLIAVLLCAIFIVVEVVGGI). At 94-105 (KANSLAILTDAA) the chain is on the vacuolar side. The chain crosses the membrane as a helical span at residues 106 to 126 (HLLSDVAAFAISLFSLWASGW). The Cytoplasmic segment spans residues 127 to 138 (KANPQQSYGFFR). Residues 139 to 159 (IEILGALVSIQMIWLLAGILV) form a helical membrane-spanning segment. The Vacuolar segment spans residues 160-176 (YEAIVRLNNGSGEVEGS). The chain crosses the membrane as a helical span at residues 177–197 (LMFAVSAVGLLVNIAMAILLG). The segment at 198–233 (HDHGHGHGHSHDNGHGHSHDHGHGIAATEHHHDSGH) is required for zinc-binding. At 198 to 257 (HDHGHGHGHSHDNGHGHSHDHGHGIAATEHHHDSGHDESQLSDVLIEQKKQRNVNIQGAY) the chain is on the cytoplasmic side. Positions 202-236 (HGHGHSHDNGHGHSHDHGHGIAATEHHHDSGHDES) are enriched in basic and acidic residues. The disordered stretch occupies residues 202–237 (HGHGHSHDNGHGHSHDHGHGIAATEHHHDSGHDESQ). The chain crosses the membrane as a helical span at residues 258–278 (LHVLGDSIQSVGVMIGGAIIW). The Vacuolar portion of the chain corresponds to 279–284 (YKPEWK). A helical membrane pass occupies residues 285–305 (ILDLICTLVFSVIVLGTTIGM). The Cytoplasmic portion of the chain corresponds to 306–393 (LRNILEVLME…SHVTIQIERQ (88 aa)).

The protein belongs to the cation diffusion facilitator (CDF) transporter (TC 2.A.4) family. SLC30A subfamily.

It localises to the membrane. Its function is as follows. Involved in sequestration of excess zinc in the cytoplasm into vacuoles to maintain zinc homeostasis. The sequence is that of Metal tolerance protein A2 (MTPA2) from Arabidopsis thaliana (Mouse-ear cress).